A 245-amino-acid polypeptide reads, in one-letter code: tRNA pseudouridine synthase A (245 aa).

Asp52 functions as the Nucleophile in the catalytic mechanism. Tyr111 contributes to the substrate binding site.

The protein belongs to the tRNA pseudouridine synthase TruA family. Homodimer.

The catalysed reaction is uridine(38/39/40) in tRNA = pseudouridine(38/39/40) in tRNA. Formation of pseudouridine at positions 38, 39 and 40 in the anticodon stem and loop of transfer RNAs. The sequence is that of tRNA pseudouridine synthase A from Rickettsia typhi (strain ATCC VR-144 / Wilmington).